A 269-amino-acid chain; its full sequence is MKI67 FHA domain-interacting nucleolar phosphoprotein (269 aa).

Positions 45 to 123 (GVLYVGHLPR…RIIKCHVIPP (79 aa)) constitute an RRM domain. Residues 234–269 (DEIVIKVKPLPENSDDVEESEEESAEEDEGEEEEAA) are disordered. The span at 246 to 269 (NSDDVEESEEESAEEDEGEEEEAA) shows a compositional bias: acidic residues.

The protein resides in the nucleus. It is found in the nucleolus. Its function is as follows. Plays an essential role in early embryonic development. This is MKI67 FHA domain-interacting nucleolar phosphoprotein (nifk) from Danio rerio (Zebrafish).